A 328-amino-acid polypeptide reads, in one-letter code: 5,10-methylenetetrahydromethanopterin reductase (328 aa).

It belongs to the mer family.

The protein localises to the cytoplasm. It catalyses the reaction 5-methyl-5,6,7,8-tetrahydromethanopterin + oxidized coenzyme F420-(gamma-L-Glu)(n) + H(+) = 5,10-methylenetetrahydromethanopterin + reduced coenzyme F420-(gamma-L-Glu)(n). It functions in the pathway one-carbon metabolism; methanogenesis from CO(2); methyl-coenzyme M from 5,10-methylene-5,6,7,8-tetrahydromethanopterin: step 1/2. In terms of biological role, catalyzes the reversible reduction of methylene-H(4)MPT to methyl-H(4)MPT. The sequence is that of 5,10-methylenetetrahydromethanopterin reductase from Methanosarcina mazei (strain ATCC BAA-159 / DSM 3647 / Goe1 / Go1 / JCM 11833 / OCM 88) (Methanosarcina frisia).